A 449-amino-acid chain; its full sequence is Tubulin beta-8 chain (449 aa).

GTP-binding residues include Gln-11, Glu-69, Ser-138, Gly-142, Thr-143, Gly-144, Asn-204, and Asn-226. Position 69 (Glu-69) interacts with Mg(2+). Positions 428-449 (ATADEEEGYEYEEDEVEVQEEQ) are disordered. The segment covering 429 to 449 (TADEEEGYEYEEDEVEVQEEQ) has biased composition (acidic residues).

Belongs to the tubulin family. In terms of assembly, dimer of alpha and beta chains. A typical microtubule is a hollow water-filled tube with an outer diameter of 25 nm and an inner diameter of 15 nM. Alpha-beta heterodimers associate head-to-tail to form protofilaments running lengthwise along the microtubule wall with the beta-tubulin subunit facing the microtubule plus end conferring a structural polarity. Microtubules usually have 13 protofilaments but different protofilament numbers can be found in some organisms and specialized cells. Mg(2+) serves as cofactor.

It localises to the cytoplasm. Its subcellular location is the cytoskeleton. Its function is as follows. Tubulin is the major constituent of microtubules, a cylinder consisting of laterally associated linear protofilaments composed of alpha- and beta-tubulin heterodimers. Microtubules grow by the addition of GTP-tubulin dimers to the microtubule end, where a stabilizing cap forms. Below the cap, tubulin dimers are in GDP-bound state, owing to GTPase activity of alpha-tubulin. The chain is Tubulin beta-8 chain (TUBB8) from Arabidopsis thaliana (Mouse-ear cress).